Reading from the N-terminus, the 373-residue chain is MEGYRLDPWASAIRLEYEKLFRYFGIKPFQPLLPEVEKAFGKPHRLMRRGIIFGHRDYEKILEAYRSGERIALVTGFMPSGKFHFGHKMVADQIIYYQKLGFEIFVVIADAEAYAVRRLDRRKIIEIGLYEYVANLIALGLEKNKHTHIYFQTNYETPYYRLIQMFSRRVTLEEMSAIYGDLEPSKIMAALTQAADILHPQLDYFGGFKYVVVPVGADQDPHIRLTRDIAARFENELGLRRPASTYHRFQTGLDGNKMSSSRPEYTIFLTDPVDIAVRKLKRALTGGRATVEEQRRLGGEPEKCTVYEFYLYHLIEDDTQLRKIYEDCRGSRLLCGPDKEYAAELLAKFLEEHQRRLERARDRVLEYVEPPKF.

The 'HIGH' region signature appears at 79–87 (PSGKFHFGH). The 'KMSKS' region motif lies at 257–261 (KMSSS).

It belongs to the class-I aminoacyl-tRNA synthetase family.

Its subcellular location is the cytoplasm. It catalyses the reaction tRNA(Trp) + L-tryptophan + ATP = L-tryptophyl-tRNA(Trp) + AMP + diphosphate + H(+). The protein is Tryptophan--tRNA ligase of Hyperthermus butylicus (strain DSM 5456 / JCM 9403 / PLM1-5).